A 260-amino-acid chain; its full sequence is Dehydrogenase/reductase SDR family member 11 (260 aa).

The N-terminal stretch at M1–A30 is a signal peptide. NADP(+) is bound by residues G18 to I23, R43 to T44, E49, D70 to L71, and N97. Positions 151 and 166 each coordinate substrate. NADP(+)-binding positions include Y166, K170, V201–Q204, and K208. Residue Y166 is the Proton acceptor of the active site.

Belongs to the short-chain dehydrogenases/reductases (SDR) family. In terms of assembly, homotetramer. As to expression, isoform 1: Ubiquitously expressed, with highest levels in testis, small intestine, colon, kidney, brain and heart. Isoform 3: Expressed in brain, heart and skeletal muscle.

Its subcellular location is the secreted. The catalysed reaction is a 3beta-hydroxysteroid + NADP(+) = a 3-oxosteroid + NADPH + H(+). The enzyme catalyses 17beta-estradiol + NAD(+) = estrone + NADH + H(+). It catalyses the reaction 17beta-estradiol + NADP(+) = estrone + NADPH + H(+). Its pathway is steroid biosynthesis; estrogen biosynthesis. Inhibited by flavonoids including apigenin, luteolin, genistein, kaempferol and quercetin and also by carbenoxolone, zearalenone, glycyrrhetinic, curcumin and flufenamic acid. In terms of biological role, catalyzes the conversion of the 17-keto group of estrone, 4- and 5-androstenes and 5-alpha-androstanes into their 17-beta-hydroxyl metabolites and the conversion of the 3-keto group of 3-, 3,17- and 3,20- diketosteroids into their 3-hydroxyl metabolites. Exhibits reductive 3-beta-hydroxysteroid dehydrogenase activity toward 5-beta-androstanes, 5-beta-pregnanes, 4-pregnenes and bile acids. May also reduce endogenous and exogenous alpha-dicarbonyl compounds and xenobiotic alicyclic ketones. The sequence is that of Dehydrogenase/reductase SDR family member 11 (DHRS11) from Homo sapiens (Human).